A 149-amino-acid chain; its full sequence is Calmodulin (149 aa).

An N-acetylalanine modification is found at Ala-2. 4 consecutive EF-hand domains span residues 8–43, 44–79, 81–116, and 117–149; these read EQIA…LGQN, PTEA…KMKD, DSEE…LGEK, and LTDE…MMSK. Residues Asp-21, Asp-23, Asp-25, Thr-27, Glu-32, Asp-57, Asp-59, Asn-61, Thr-63, Glu-68, Asp-94, Asp-96, Asn-98, and Glu-105 each contribute to the Ca(2+) site. Lys-116 carries the post-translational modification N6,N6,N6-trimethyllysine. Ca(2+) is bound by residues Asp-130, Asp-132, Asp-134, Gln-136, and Glu-141.

This sequence belongs to the calmodulin family.

Calmodulin mediates the control of a large number of enzymes, ion channels and other proteins by Ca(2+). Among the enzymes to be stimulated by the calmodulin-Ca(2+) complex are a number of protein kinases and phosphatases. The chain is Calmodulin (cam) from Saccharina japonica (Sweet kelp).